Here is a 278-residue protein sequence, read N- to C-terminus: Delta(3,5)-Delta(2,4)-dienoyl-CoA isomerase, peroxisomal (278 aa).

Met-1 is subject to N-acetylmethionine. Residues Ser-69–Leu-73 and Gly-128 each bind substrate. A Microbody targeting signal motif is present at residues Ala-276–Leu-278.

It belongs to the enoyl-CoA hydratase/isomerase family. Expressed in roots, leaves, stems and flowers.

Its subcellular location is the peroxisome. The enzyme catalyses a (3E,5Z)-dienoyl-CoA = a (2E,4E)-(5,6-saturated)-dienoyl-CoA. It functions in the pathway lipid metabolism; fatty acid beta-oxidation. Converts 3,5-dienoyl-CoAs to the corresponding 2,4-dienoyl-CoAs. Involved in degradation of unsaturated fatty acids. This is Delta(3,5)-Delta(2,4)-dienoyl-CoA isomerase, peroxisomal from Arabidopsis thaliana (Mouse-ear cress).